A 149-amino-acid chain; its full sequence is Transcriptional repressor NrdR (149 aa).

A zinc finger spans residues Cys-3–Cys-34. The 91-residue stretch at Pro-49 to Ala-139 folds into the ATP-cone domain.

This sequence belongs to the NrdR family. Requires Zn(2+) as cofactor.

Its function is as follows. Negatively regulates transcription of bacterial ribonucleotide reductase nrd genes and operons by binding to NrdR-boxes. This is Transcriptional repressor NrdR from Ruthia magnifica subsp. Calyptogena magnifica.